The following is a 231-amino-acid chain: Orotate phosphoribosyltransferase (231 aa).

Residues Lys-27, 79–80 (YK), Arg-106, Lys-107, Lys-110, His-112, and 133–141 (DDVMTAGTA) each bind 5-phospho-alpha-D-ribose 1-diphosphate. Residues Thr-137 and Arg-166 each contribute to the orotate site.

Belongs to the purine/pyrimidine phosphoribosyltransferase family. PyrE subfamily. Homodimer. Requires Mg(2+) as cofactor.

It carries out the reaction orotidine 5'-phosphate + diphosphate = orotate + 5-phospho-alpha-D-ribose 1-diphosphate. Its pathway is pyrimidine metabolism; UMP biosynthesis via de novo pathway; UMP from orotate: step 1/2. In terms of biological role, catalyzes the transfer of a ribosyl phosphate group from 5-phosphoribose 1-diphosphate to orotate, leading to the formation of orotidine monophosphate (OMP). The chain is Orotate phosphoribosyltransferase from Bifidobacterium longum (strain NCC 2705).